We begin with the raw amino-acid sequence, 891 residues long: Protein SEY1 homolog (891 aa).

Over 1–754 the chain is Cytoplasmic; sequence MNLHLVDSDG…LRAAEAGNQR (754 aa). The region spanning 52–318 is the GB1/RHD3-type G domain; that stretch reads GLNYHVVGVF…RCSDYLFSYH (267 aa). 62-69 provides a ligand contact to GTP; that stretch reads GGQSSGKS. A helical membrane pass occupies residues 755 to 775; that stretch reads LPAWVIPALFILGWNELLYVL. Residues 776–778 are Lumenal-facing; the sequence is TSP. The helical transmembrane segment at 779-799 threads the bilayer; sequence ALLVLVVVICAVFFRQFFVSQ. At 800-891 the chain is on the cytoplasmic side; the sequence is WHAFEETGPA…MRHRTTHKLD (92 aa). A compositionally biased stretch (polar residues) spans 863–880; the sequence is STHADPAPSNTTVPTAQA. The segment at 863 to 891 is disordered; it reads STHADPAPSNTTVPTAQATMRHRTTHKLD. Residues 882–891 are compositionally biased toward basic residues; sequence MRHRTTHKLD.

Belongs to the TRAFAC class dynamin-like GTPase superfamily. GB1/RHD3 GTPase family. RHD3 subfamily.

Its subcellular location is the endoplasmic reticulum membrane. In terms of biological role, probable GTP-binding protein that may be involved in cell development. The polypeptide is Protein SEY1 homolog (Leishmania braziliensis).